Here is a 137-residue protein sequence, read N- to C-terminus: BolA-like protein 1 (137 aa).

Position 81 is a phosphoserine (serine 81). A disordered region spans residues 115–137; sequence RENPQLDISPPCLGGSKKTRGTS.

This sequence belongs to the BolA/IbaG family. In terms of assembly, interacts with GLRX5.

It localises to the mitochondrion. Its function is as follows. Acts as a mitochondrial iron-sulfur (Fe-S) cluster assembly factor that facilitates (Fe-S) cluster insertion into a subset of mitochondrial proteins. Probably acts together with the monothiol glutaredoxin GLRX5. May protect cells against oxidative stress. This Mus musculus (Mouse) protein is BolA-like protein 1 (Bola1).